Here is a 185-residue protein sequence, read N- to C-terminus: Elongation factor P (185 aa).

Belongs to the elongation factor P family.

It localises to the cytoplasm. Its pathway is protein biosynthesis; polypeptide chain elongation. Functionally, involved in peptide bond synthesis. Stimulates efficient translation and peptide-bond synthesis on native or reconstituted 70S ribosomes in vitro. Probably functions indirectly by altering the affinity of the ribosome for aminoacyl-tRNA, thus increasing their reactivity as acceptors for peptidyl transferase. In Bacillus cereus (strain 03BB102), this protein is Elongation factor P.